The primary structure comprises 245 residues: Dof zinc finger protein DOF3.2 (245 aa).

Over residues 15 to 26 the composition is skewed to polar residues; the sequence is SCSTQDYQNQKK. Positions 15–41 are disordered; the sequence is SCSTQDYQNQKKPLSATRPAPPEQSLR. A Dof-type zinc finger spans residues 40 to 94; it reads LRCPRCDSTNTKFCYYNNYSLSQPRYFCKSCRRYWTKGGILRNIPIGGAYRKHKR. Zn(2+) contacts are provided by cysteine 42, cysteine 45, cysteine 67, and cysteine 70. Positions 91 to 118 are disordered; it reads KHKRSSSATKSLRTTPEPTMTHDGKSFP. The span at 96–108 shows a compositional bias: polar residues; the sequence is SSATKSLRTTPEP.

Interacts with TCP14. In terms of tissue distribution, the PEAR proteins (e.g. DOF2.4, DOF5.1, DOF3.2, DOF1.1, DOF5.6 and DOF5.3) form a short-range concentration gradient that peaks at protophloem sieve elements (PSE).

It is found in the nucleus. Transcription factor that negatively affects seed germination and opposes TCP14 function in the regulation of a specific set of abscisic acid-related genes. The PEAR proteins (e.g. DOF2.4, DOF5.1, DOF3.2, DOF1.1, DOF5.6 and DOF5.3) activate gene expression that promotes radial growth of protophloem sieve elements. The protein is Dof zinc finger protein DOF3.2 of Arabidopsis thaliana (Mouse-ear cress).